A 304-amino-acid chain; its full sequence is Serine/threonine-protein phosphatase PP1 isozyme 3 (304 aa).

Aspartate 61, histidine 63, aspartate 89, and asparagine 121 together coordinate Mn(2+). The Proton donor role is filled by histidine 122. Positions 170 and 245 each coordinate Mn(2+).

The protein belongs to the PPP phosphatase family. PP-1 subfamily. Requires Mn(2+) as cofactor.

It catalyses the reaction O-phospho-L-seryl-[protein] + H2O = L-seryl-[protein] + phosphate. The enzyme catalyses O-phospho-L-threonyl-[protein] + H2O = L-threonyl-[protein] + phosphate. In Nicotiana tabacum (Common tobacco), this protein is Serine/threonine-protein phosphatase PP1 isozyme 3 (NPP3).